The chain runs to 262 residues: Putative outer membrane protein CPn_1034/CP_0818/CPj1034/CpB1074 (262 aa).

The N-terminal stretch at 1–17 (MKTWLFFTFLFSCSSFY) is a signal peptide.

The protein resides in the cell outer membrane. The sequence is that of Putative outer membrane protein CPn_1034/CP_0818/CPj1034/CpB1074 from Chlamydia pneumoniae (Chlamydophila pneumoniae).